The primary structure comprises 155 residues: Conopressin/neurophysin (155 aa).

The first 26 residues, 1 to 26, serve as a signal peptide directing secretion; it reads MMSSLCGMPLTYLLTAAVLSLSLTDA. Cysteine 27 and cysteine 32 are disulfide-bonded. Glycine amide is present on glycine 35. 7 cysteine pairs are disulfide-bonded: cysteine 50–cysteine 94, cysteine 53–cysteine 67, cysteine 61–cysteine 84, cysteine 68–cysteine 74, cysteine 101–cysteine 115, cysteine 109–cysteine 127, and cysteine 116–cysteine 121. N-linked (GlcNAc...) asparagine glycosylation is present at asparagine 88.

It belongs to the vasopressin/oxytocin family. Seven disulfide bonds are present in neurophysin.

Its subcellular location is the secreted. This is Conopressin/neurophysin from Lymnaea stagnalis (Great pond snail).